Here is a 95-residue protein sequence, read N- to C-terminus: Co-chaperonin GroES (95 aa).

The protein belongs to the GroES chaperonin family. Heptamer of 7 subunits arranged in a ring. Interacts with the chaperonin GroEL.

The protein localises to the cytoplasm. Together with the chaperonin GroEL, plays an essential role in assisting protein folding. The GroEL-GroES system forms a nano-cage that allows encapsulation of the non-native substrate proteins and provides a physical environment optimized to promote and accelerate protein folding. GroES binds to the apical surface of the GroEL ring, thereby capping the opening of the GroEL channel. The polypeptide is Co-chaperonin GroES (Desulfosudis oleivorans (strain DSM 6200 / JCM 39069 / Hxd3) (Desulfococcus oleovorans)).